A 413-amino-acid polypeptide reads, in one-letter code: 26S proteasome regulatory subunit 6B homolog (413 aa).

The segment at 1–30 (MATAMVLDPKPAEKLPATRPETSITDVPSD) is disordered. Positions 32–80 (EDDLYARLKSLQRQLEFIEIQEEYVKDELKNLRREHLRAQEEVKRIQSV) form a coiled coil. 201–208 (GPPGTGKT) contacts ATP.

It belongs to the AAA ATPase family.

It localises to the cytoplasm. The protein localises to the nucleus. The 26S proteasome is involved in the ATP-dependent degradation of ubiquitinated proteins. The regulatory (or ATPase) complex confers ATP dependency and substrate specificity to the 26S complex. The polypeptide is 26S proteasome regulatory subunit 6B homolog (Solanum tuberosum (Potato)).